The sequence spans 1258 residues: Cohesin subunit SA-1 (1258 aa).

The interval Met-1–Arg-59 is disordered. Residues Gln-10–His-19 are compositionally biased toward polar residues. Phosphoserine is present on Ser-24. Residues Phe-296–Met-381 enclose the SCD domain. Phosphoserine is present on residues Ser-756, Ser-1062, and Ser-1065. The interval Gly-1055–His-1148 is disordered. Residues Ser-1062–Val-1075 show a composition bias toward low complexity. The segment covering Arg-1076–Lys-1087 has biased composition (basic residues). Ser-1093 bears the Phosphoserine mark. Residues Asp-1095 to Ile-1106 are compositionally biased toward polar residues. The segment covering Glu-1137–Phe-1146 has biased composition (basic and acidic residues). Lys-1161 is covalently cross-linked (Glycyl lysine isopeptide (Lys-Gly) (interchain with G-Cter in SUMO2)).

This sequence belongs to the SCC3 family. As to quaternary structure, cohesin complexes are composed of a heterodimer between a SMC1 protein (SMC1A or SMC1B) and SMC3, which are attached via their hinge domain, and RAD21 which link them at their heads, and one STAG protein (STAG1, STAG2 or STAG3). In cohesin complexes, STAG1 is mutually exclusive with STAG2 and STAG3. Interacts directly with RAD21 in cohesin complex. The cohesin complex interacts with the cohesin loading complex subunits NIPBL/Scc2 (via HEAT repeats) and MAU2/Scc4. NIPBL directly contacts all members of the complex, RAD21, SMC1A/B, SMC3 and STAG1. Phosphorylated by PLK1. The large dissociation of cohesin from chromosome arms during prophase is partly due to its phosphorylation.

Its subcellular location is the nucleus. It localises to the chromosome. Its function is as follows. Component of cohesin complex, a complex required for the cohesion of sister chromatids after DNA replication. The cohesin complex apparently forms a large proteinaceous ring within which sister chromatids can be trapped. At anaphase, the complex is cleaved and dissociates from chromatin, allowing sister chromatids to segregate. The cohesin complex may also play a role in spindle pole assembly during mitosis. This is Cohesin subunit SA-1 (Stag1) from Mus musculus (Mouse).